A 156-amino-acid polypeptide reads, in one-letter code: Crossover junction endodeoxyribonuclease RuvC (156 aa).

Active-site residues include aspartate 7, glutamate 67, and aspartate 139. Residues aspartate 7, glutamate 67, and aspartate 139 each coordinate Mg(2+).

The protein belongs to the RuvC family. As to quaternary structure, homodimer which binds Holliday junction (HJ) DNA. The HJ becomes 2-fold symmetrical on binding to RuvC with unstacked arms; it has a different conformation from HJ DNA in complex with RuvA. In the full resolvosome a probable DNA-RuvA(4)-RuvB(12)-RuvC(2) complex forms which resolves the HJ. Mg(2+) serves as cofactor.

It localises to the cytoplasm. The catalysed reaction is Endonucleolytic cleavage at a junction such as a reciprocal single-stranded crossover between two homologous DNA duplexes (Holliday junction).. In terms of biological role, the RuvA-RuvB-RuvC complex processes Holliday junction (HJ) DNA during genetic recombination and DNA repair. Endonuclease that resolves HJ intermediates. Cleaves cruciform DNA by making single-stranded nicks across the HJ at symmetrical positions within the homologous arms, yielding a 5'-phosphate and a 3'-hydroxyl group; requires a central core of homology in the junction. The consensus cleavage sequence is 5'-(A/T)TT(C/G)-3'. Cleavage occurs on the 3'-side of the TT dinucleotide at the point of strand exchange. HJ branch migration catalyzed by RuvA-RuvB allows RuvC to scan DNA until it finds its consensus sequence, where it cleaves and resolves the cruciform DNA. In Sphingopyxis alaskensis (strain DSM 13593 / LMG 18877 / RB2256) (Sphingomonas alaskensis), this protein is Crossover junction endodeoxyribonuclease RuvC.